The following is a 287-amino-acid chain: Flagellin (287 aa).

It belongs to the bacterial flagellin family.

It is found in the secreted. It localises to the bacterial flagellum. Its function is as follows. Flagellin is the subunit protein which polymerizes to form the filaments of bacterial flagella. In Listeria innocua serovar 6a (strain ATCC BAA-680 / CLIP 11262), this protein is Flagellin (flaA).